A 327-amino-acid polypeptide reads, in one-letter code: Methionyl-tRNA formyltransferase (327 aa).

A (6S)-5,6,7,8-tetrahydrofolate-binding site is contributed by 121 to 124 (SLLP).

It belongs to the Fmt family.

It catalyses the reaction L-methionyl-tRNA(fMet) + (6R)-10-formyltetrahydrofolate = N-formyl-L-methionyl-tRNA(fMet) + (6S)-5,6,7,8-tetrahydrofolate + H(+). Functionally, attaches a formyl group to the free amino group of methionyl-tRNA(fMet). The formyl group appears to play a dual role in the initiator identity of N-formylmethionyl-tRNA by promoting its recognition by IF2 and preventing the misappropriation of this tRNA by the elongation apparatus. This Burkholderia pseudomallei (strain 668) protein is Methionyl-tRNA formyltransferase.